The following is a 659-amino-acid chain: Mitochondrial Rho GTPase 1 (659 aa).

Over 1–631 (MTKTRIRIVV…LTNDIDYRQT (631 aa)) the chain is Cytoplasmic. Positions 3–183 (KTRIRIVVCG…FYLCQRTITN (181 aa)) constitute a Miro 1 domain. GTP-binding positions include 12–19 (GDSGVGKT), 61–63 (DTG), and 115–118 (NKCD). 2 consecutive EF-hand domains span residues 199 to 234 (LGVL…CFSK) and 328 to 363 (LGYR…TPGL). Residues Asp212, Asp214, Asp216, Glu223, Asp341, Asp343, Asp345, and Glu352 each contribute to the Ca(2+) site. The Miro 2 domain occupies 444–609 (RKVLNCYMLG…FIKLTEVALE (166 aa)). Residues 453–460 (GKGNSGKS), 489–493 (ELKGG), and 558–561 (LKAD) each bind GTP. Residues 632–652 (IVAISSVVGFASLFTFTALKI) form a helical; Anchor for type IV membrane protein membrane-spanning segment. Residues 653–659 (YSSFKNT) lie on the Mitochondrial intermembrane side of the membrane.

It belongs to the mitochondrial Rho GTPase family.

Its subcellular location is the mitochondrion outer membrane. In terms of biological role, mitochondrial GTPase involved in mitochondrial trafficking. Probably involved in control of anterograde transport of mitochondria and their subcellular distribution. The protein is Mitochondrial Rho GTPase 1 (GEM1) of Kluyveromyces lactis (strain ATCC 8585 / CBS 2359 / DSM 70799 / NBRC 1267 / NRRL Y-1140 / WM37) (Yeast).